Here is a 335-residue protein sequence, read N- to C-terminus: Ketol-acid reductoisomerase (NADP(+)) 2 (335 aa).

One can recognise a KARI N-terminal Rossmann domain in the interval methionine 1 to threonine 180. NADP(+) is bound by residues tyrosine 24–glutamine 27, arginine 47, serine 51, and aspartate 81–glutamine 84. The active site involves histidine 106. Residue glycine 132 participates in NADP(+) binding. The 146-residue stretch at threonine 181–isoleucine 326 folds into the KARI C-terminal knotted domain. 4 residues coordinate Mg(2+): aspartate 189, glutamate 193, glutamate 225, and glutamate 229. A substrate-binding site is contributed by serine 250.

The protein belongs to the ketol-acid reductoisomerase family. Requires Mg(2+) as cofactor.

It catalyses the reaction (2R)-2,3-dihydroxy-3-methylbutanoate + NADP(+) = (2S)-2-acetolactate + NADPH + H(+). The enzyme catalyses (2R,3R)-2,3-dihydroxy-3-methylpentanoate + NADP(+) = (S)-2-ethyl-2-hydroxy-3-oxobutanoate + NADPH + H(+). It participates in amino-acid biosynthesis; L-isoleucine biosynthesis; L-isoleucine from 2-oxobutanoate: step 2/4. It functions in the pathway amino-acid biosynthesis; L-valine biosynthesis; L-valine from pyruvate: step 2/4. Involved in the biosynthesis of branched-chain amino acids (BCAA). Catalyzes an alkyl-migration followed by a ketol-acid reduction of (S)-2-acetolactate (S2AL) to yield (R)-2,3-dihydroxy-isovalerate. In the isomerase reaction, S2AL is rearranged via a Mg-dependent methyl migration to produce 3-hydroxy-3-methyl-2-ketobutyrate (HMKB). In the reductase reaction, this 2-ketoacid undergoes a metal-dependent reduction by NADPH to yield (R)-2,3-dihydroxy-isovalerate. This is Ketol-acid reductoisomerase (NADP(+)) 2 from Bacillus thuringiensis subsp. konkukian (strain 97-27).